The sequence spans 130 residues: Small ribosomal subunit protein uS8 (130 aa).

It belongs to the universal ribosomal protein uS8 family. As to quaternary structure, part of the 30S ribosomal subunit. Contacts proteins S5 and S12.

One of the primary rRNA binding proteins, it binds directly to 16S rRNA central domain where it helps coordinate assembly of the platform of the 30S subunit. This chain is Small ribosomal subunit protein uS8, found in Vibrio campbellii (strain ATCC BAA-1116).